Reading from the N-terminus, the 417-residue chain is Gamma-glutamyl phosphate reductase (417 aa).

This sequence belongs to the gamma-glutamyl phosphate reductase family.

Its subcellular location is the cytoplasm. It catalyses the reaction L-glutamate 5-semialdehyde + phosphate + NADP(+) = L-glutamyl 5-phosphate + NADPH + H(+). It functions in the pathway amino-acid biosynthesis; L-proline biosynthesis; L-glutamate 5-semialdehyde from L-glutamate: step 2/2. Functionally, catalyzes the NADPH-dependent reduction of L-glutamate 5-phosphate into L-glutamate 5-semialdehyde and phosphate. The product spontaneously undergoes cyclization to form 1-pyrroline-5-carboxylate. The polypeptide is Gamma-glutamyl phosphate reductase (Escherichia coli O8 (strain IAI1)).